Here is a 177-residue protein sequence, read N- to C-terminus: FMRFamide-like neuropeptides 7 (177 aa).

The N-terminal stretch at 1-19 is a signal peptide; the sequence is MLGSRFLLLALGLLVLVLA. Residues 20 to 49 constitute a propeptide that is removed on maturation; sequence EESAEQQVQEPTELEKSGEQLSEEDLIDEQ. The segment at 25 to 106 is disordered; sequence QQVQEPTELE…RSSMVRFGKR (82 aa). Phenylalanine amide is present on residues phenylalanine 62, phenylalanine 75, phenylalanine 89, phenylalanine 103, phenylalanine 117, and phenylalanine 130. Position 143 is a leucine amide (leucine 143). Phenylalanine 157 carries the post-translational modification Phenylalanine amide. Residues 161 to 177 constitute a propeptide that is removed on maturation; sequence SMEFEMQSNEKNIEDSE.

It belongs to the FARP (FMRFamide related peptide) family. Expressed in the ASI sensory neurons, the ALA interneuron and the AVG interneuron from where secretion occurs. Expression in the ASI neurons is necessary and sufficient to maintain serotonin-induced fat loss.

The protein localises to the secreted. FMRFamide-like neuropeptides. Stimulates serotonin-induced fat loss by binding to and activating the npr-22 receptor which leads to induction of the atgl-1 lipase and subsequent fat loss. Together with atfs-1, negatively regulates the expression of the transcription regulator hlh-11, to promote expression of atgl-1, and thus atgl-1-dependent fat oxidation in response to mitochondrial stress. In terms of biological role, TPMQRSSMVRF-amide: Acts as a ligand for the npr-22 receptor in vitro. Functionally, SPMQRSSMVRF-amide: Acts as a ligand for the npr-22 receptor in vitro. Its function is as follows. Acts as a ligand for the npr-22 receptor in vitro. This is FMRFamide-like neuropeptides 7 from Caenorhabditis elegans.